A 220-amino-acid chain; its full sequence is UPF0711 protein C18orf21 (220 aa).

The interval 117 to 181 (SRSFVSTLKS…VSTCSSKNTS (65 aa)) is disordered. The segment covering 119–136 (SFVSTLKSNPATPTSKLS) has biased composition (polar residues). A Phosphoserine modification is found at Ser126. Thr130 and Thr139 each carry phosphothreonine. Residues 171–180 (SVSTCSSKNT) are compositionally biased toward low complexity.

This sequence belongs to the UPF0711 family.

The protein is UPF0711 protein C18orf21 (C18orf21) of Homo sapiens (Human).